The chain runs to 273 residues: MQWNVPRTMSRLALRTFLEAQKARLFDHHRSTKGLLLVHRGEYRVAWTPHLRKQWLHLSAVQCLAKQRNLLDAQPPQRGALPQGRWEQDILSKRVLSSSSTSQETPSEKKEEPDPLQDKSISLYQRFKKTFRQYGKVLIPVHLITSGIWFGTFYYASIKGVNVIPFLEFLGLPDSVVDILKNSQSGNALTAYAMFKIATPARYTVTLGGTSFTVKYLRSHGYMSTPPPVKEYLQGRMEETKELISEKMEETKDRLTEKLQETKEKVSFKKKVE.

Residues 95-116 (VLSSSSTSQETPSEKKEEPDPL) form a disordered region. Residues 106–116 (PSEKKEEPDPL) are compositionally biased toward basic and acidic residues. A DUF1279 domain is found at 118-230 (DKSISLYQRF…GYMSTPPPVK (113 aa)). A helical transmembrane segment spans residues 138-158 (LIPVHLITSGIWFGTFYYASI). The stretch at 233 to 272 (LQGRMEETKELISEKMEETKDRLTEKLQETKEKVSFKKKV) forms a coiled coil. Residues 247-273 (KMEETKDRLTEKLQETKEKVSFKKKVE) form a disordered region.

The protein belongs to the FAM210 family. In terms of assembly, interacts with ATAD3A.

It localises to the membrane. The protein localises to the mitochondrion. The protein resides in the cytoplasm. May play a role in the structure and strength of both muscle and bone. This Rattus norvegicus (Rat) protein is Protein FAM210A (Fam210a).